The following is a 548-amino-acid chain: Adenine deaminase (548 aa).

Belongs to the metallo-dependent hydrolases superfamily. Adenine deaminase family. Requires Mn(2+) as cofactor.

The enzyme catalyses adenine + H2O + H(+) = hypoxanthine + NH4(+). This Borreliella afzelii (strain PKo) (Borrelia afzelii) protein is Adenine deaminase.